The primary structure comprises 384 residues: F-box A protein 224 (384 aa).

Residues 71 to 122 enclose the F-box domain; it reads PKSLSDFPIGVMYDVLGHVDPFERLVLRKVSRNLRDVVQKMRCELDALYVNK.

It belongs to the FTH family.

This Caenorhabditis elegans protein is F-box A protein 224 (fbxa-224).